The following is a 417-amino-acid chain: Serine hydroxymethyltransferase (417 aa).

Residues Leu116 and 120-122 (GHL) contribute to the (6S)-5,6,7,8-tetrahydrofolate site. An N6-(pyridoxal phosphate)lysine modification is found at Lys225.

The protein belongs to the SHMT family. In terms of assembly, homodimer. It depends on pyridoxal 5'-phosphate as a cofactor.

The protein localises to the cytoplasm. The catalysed reaction is (6R)-5,10-methylene-5,6,7,8-tetrahydrofolate + glycine + H2O = (6S)-5,6,7,8-tetrahydrofolate + L-serine. The protein operates within one-carbon metabolism; tetrahydrofolate interconversion. It participates in amino-acid biosynthesis; glycine biosynthesis; glycine from L-serine: step 1/1. Functionally, catalyzes the reversible interconversion of serine and glycine with tetrahydrofolate (THF) serving as the one-carbon carrier. This reaction serves as the major source of one-carbon groups required for the biosynthesis of purines, thymidylate, methionine, and other important biomolecules. Also exhibits THF-independent aldolase activity toward beta-hydroxyamino acids, producing glycine and aldehydes, via a retro-aldol mechanism. This Hydrogenobaculum sp. (strain Y04AAS1) protein is Serine hydroxymethyltransferase.